The chain runs to 311 residues: Probable branched-chain-amino-acid aminotransferase (311 aa).

Lys160 bears the N6-(pyridoxal phosphate)lysine mark.

It belongs to the class-IV pyridoxal-phosphate-dependent aminotransferase family. Pyridoxal 5'-phosphate is required as a cofactor.

The catalysed reaction is L-leucine + 2-oxoglutarate = 4-methyl-2-oxopentanoate + L-glutamate. The enzyme catalyses L-isoleucine + 2-oxoglutarate = (S)-3-methyl-2-oxopentanoate + L-glutamate. It catalyses the reaction L-valine + 2-oxoglutarate = 3-methyl-2-oxobutanoate + L-glutamate. It participates in amino-acid biosynthesis; L-isoleucine biosynthesis; L-isoleucine from 2-oxobutanoate: step 4/4. The protein operates within amino-acid biosynthesis; L-leucine biosynthesis; L-leucine from 3-methyl-2-oxobutanoate: step 4/4. It functions in the pathway amino-acid biosynthesis; L-valine biosynthesis; L-valine from pyruvate: step 4/4. In terms of biological role, acts on leucine, isoleucine and valine. This is Probable branched-chain-amino-acid aminotransferase (ilvE) from Aquifex aeolicus (strain VF5).